Consider the following 251-residue polypeptide: Small ribosomal subunit protein uS2 (251 aa).

Belongs to the universal ribosomal protein uS2 family.

The protein is Small ribosomal subunit protein uS2 of Synechococcus elongatus (strain ATCC 33912 / PCC 7942 / FACHB-805) (Anacystis nidulans R2).